Here is a 417-residue protein sequence, read N- to C-terminus: Calreticulin (417 aa).

The N-terminal stretch at 1-17 is a signal peptide; that stretch reads MLLPVPLLLGLVGLAAA. Positions 18–197 are N-domain; sequence EPTIYFKEQF…NSQVESGSLE (180 aa). Ca(2+)-binding residues include glutamine 26, lysine 62, and lysine 64. Lysine 64 carries the post-translational modification N6-(2-hydroxyisobutyryl)lysine. 4 residues coordinate an alpha-D-glucoside: tyrosine 109, lysine 111, tyrosine 128, and aspartate 135. A disulfide bridge connects residues cysteine 137 and cysteine 163. Lysine 159 is subject to N6-acetyllysine. The 1-1 repeat unit spans residues 191–202; sequence VESGSLEDDWDF. The interval 191–255 is 4 X approximate repeats; sequence VESGSLEDDW…DAKKPEDWDE (65 aa). A disordered region spans residues 193–277; the sequence is SGSLEDDWDF…NPEYKGEWKP (85 aa). Residues 198–308 are P-domain; the sequence is DDWDFLPPKK…YSPDSNIYAY (111 aa). Over residues 207–251 the composition is skewed to basic and acidic residues; that stretch reads KIKDPDAVKPEDWDERAKIDDPTDSKPEDWDKPEHIPDPDAKKPE. The residue at position 209 (lysine 209) is an N6-acetyllysine. Repeat copies occupy residues 210–221, 227–238, 244–255, 259–269, 273–283, and 287–297. Positions 237–270 are interaction with PPIB; the sequence is DKPEHIPDPDAKKPEDWDEEMDGEWEPPVIQNPE. The segment covering 252 to 261 has biased composition (acidic residues); sequence DWDEEMDGEW. Positions 259 to 297 are 3 X approximate repeats; that stretch reads GEWEPPVIQNPEYKGEWKPRQIDNPDYKGTWIHPEIDNP. A C-domain region spans residues 309-417; it reads ENFAVLGLDL…AAAGQAKDEL (109 aa). Aspartate 317 is a binding site for an alpha-D-glucoside. Residue aspartate 328 coordinates Ca(2+). The segment at 350–417 is disordered; it reads TKAAEKQMKD…AAAGQAKDEL (68 aa). Residues 352 to 379 show a composition bias toward basic and acidic residues; sequence AAEKQMKDKQDEEQRLKEEEEEKKRKEE. Positions 380–408 are enriched in acidic residues; that stretch reads EEVDKEDEEDKDEDEEEEDEKEEEEEEDA. The Prevents secretion from ER motif lies at 414–417; the sequence is KDEL.

This sequence belongs to the calreticulin family. Monomer. Component of an EIF2 complex at least composed of CELF1/CUGBP1, CALR, CALR3, EIF2S1, EIF2S2, HSP90B1 and HSPA5. Interacts with PDIA3/ERp57 and SPACA9. Interacts with TRIM21. Interacts with NR3C1. Interacts with PPIB. Interacts (via P-domain) with PDIA5. Interacts with CLCC1. In blastocyst expressed in all blastomeres (at protein level). In embryos, expressed in spleen, kidney, liver, fat, muscle, ovary, granulosa cells and cumulus cells.

Its subcellular location is the endoplasmic reticulum lumen. The protein localises to the cytoplasm. The protein resides in the cytosol. It is found in the secreted. It localises to the extracellular space. Its subcellular location is the extracellular matrix. The protein localises to the cell surface. The protein resides in the sarcoplasmic reticulum lumen. It is found in the cytoplasmic vesicle. It localises to the secretory vesicle. Its subcellular location is the cortical granule. The protein localises to the cytolytic granule. Functionally, calcium-binding chaperone that promotes folding, oligomeric assembly and quality control in the endoplasmic reticulum (ER) via the calreticulin/calnexin cycle. This lectin interacts transiently with almost all of the monoglucosylated glycoproteins that are synthesized in the ER. Interacts with the DNA-binding domain of NR3C1 and mediates its nuclear export. Involved in maternal gene expression regulation. May participate in oocyte maturation via the regulation of calcium homeostasis. Present in the cortical granules of non-activated oocytes, is exocytosed during the cortical reaction in response to oocyte activation and might participate in the block to polyspermy. This Sus scrofa (Pig) protein is Calreticulin (CALR).